Consider the following 358-residue polypeptide: Glutamine synthetase (358 aa).

The GS beta-grasp domain occupies 25–104; sequence VQAEYIWIDA…VLCECYDNDG (80 aa). The GS catalytic domain maps to 111–358; it reads YRAHCKKVMD…ILVETTVLNN (248 aa).

It belongs to the glutamine synthetase family. As to quaternary structure, homooctamer.

It localises to the cytoplasm. It carries out the reaction L-glutamate + NH4(+) + ATP = L-glutamine + ADP + phosphate + H(+). The sequence is that of Glutamine synthetase (GLN1) from Cryptococcus neoformans var. neoformans serotype D (strain B-3501A) (Filobasidiella neoformans).